The following is a 292-amino-acid chain: Acetylglutamate kinase (292 aa).

Residues 64–65, arginine 86, and asparagine 190 contribute to the substrate site; that span reads GG.

This sequence belongs to the acetylglutamate kinase family. ArgB subfamily.

It localises to the cytoplasm. It carries out the reaction N-acetyl-L-glutamate + ATP = N-acetyl-L-glutamyl 5-phosphate + ADP. It participates in amino-acid biosynthesis; L-arginine biosynthesis; N(2)-acetyl-L-ornithine from L-glutamate: step 2/4. In terms of biological role, catalyzes the ATP-dependent phosphorylation of N-acetyl-L-glutamate. The protein is Acetylglutamate kinase of Geotalea uraniireducens (strain Rf4) (Geobacter uraniireducens).